A 417-amino-acid polypeptide reads, in one-letter code: Pelargonidin 3-O-(6-caffeoylglucoside) 5-O-(6-O-malonylglucoside) 4'''-malonyltransferase (417 aa).

Active-site proton acceptor residues include His-147 and Asp-360.

This sequence belongs to the plant acyltransferase family. As to quaternary structure, monomer. Expressed at higher level in recently opened, fully pigmented flowers.

The catalysed reaction is 4'''-demalonylsalvianin + malonyl-CoA = salvianin + CoA. The protein operates within pigment biosynthesis; anthocyanin biosynthesis. Its activity is regulated as follows. Inhibited by the following metal ions: Cd(2+), Cu(2+), Fe(2+), Hg(2+) and Zn(2+). Activity is strongly inhibited by CoA-SH and partially inhibited by acetyl-CoA, caffeic acid and bisdemalonylsalvianin. Functionally, catalyzes the transfer of the malonyl group from malonyl-CoA to the 4'''-hydroxyl group of the 5-glucosyl moiety of anthocyanins. Anthocyanins are ubiquitous colored pigments that are responsible for petal color. The polypeptide is Pelargonidin 3-O-(6-caffeoylglucoside) 5-O-(6-O-malonylglucoside) 4'''-malonyltransferase (Salvia splendens (Scarlet sage)).